We begin with the raw amino-acid sequence, 1257 residues long: Endochitinase A (1257 aa).

Residues 1–21 form the signal peptide; that stretch reads MVFKPLTIAAAIAGLTPFVSA. The region spanning 28–339 is the GH18 domain; it reads SNVAVYYGQG…DVIKDILVAV (312 aa). The Proton donor role is filled by glutamate 175. Disordered stretches follow at residues 364–429, 595–980, and 1141–1174; these read TPVA…STPV, TPAA…LAPI, and DALT…PTTT. Over residues 595-696 the composition is skewed to low complexity; that stretch reads TPAASSSPAV…STPVRSTSSV (102 aa). Residues 700–715 show a composition bias toward polar residues; it reads KSSSAPVIPKPSSTVI. Over residues 716–935 the composition is skewed to low complexity; sequence ATFTSSSGSL…ASGSGAQDST (220 aa). A glycan (N-linked (GlcNAc...) asparagine) is linked at asparagine 825. The segment covering 940-964 has biased composition (polar residues); the sequence is HASTLSPSYSTPLASASGQTGSPTT. Residue asparagine 973 is glycosylated (N-linked (GlcNAc...) asparagine). Positions 1145 to 1154 are enriched in polar residues; the sequence is ASPSGSQPAG. Over residues 1156 to 1174 the composition is skewed to low complexity; the sequence is SSPGQSAPTAPASTAPTTT. Glycine 1231 carries GPI-anchor amidated glycine lipidation. Residues 1232–1257 constitute a propeptide, removed in mature form; the sequence is AASRVSRLQHGAGAVSAFALFLLAAI.

It belongs to the glycosyl hydrolase 18 family. Chitinase class III subfamily. Post-translationally, O-glycosylated.

It localises to the cell membrane. The protein localises to the secreted. It is found in the cell wall. The catalysed reaction is Random endo-hydrolysis of N-acetyl-beta-D-glucosaminide (1-&gt;4)-beta-linkages in chitin and chitodextrins.. Functionally, GPI-anchored chitinase involved in the degradation of chitin, a component of the cell walls of fungi and exoskeletal elements of some animals (including worms and arthropods). Required to reshape the cell wall at the sites where cell wall remodeling and/or cell wall maturation actively take place such as sites of conidia formation. This chain is Endochitinase A (ctcA), found in Aspergillus niger (strain ATCC MYA-4892 / CBS 513.88 / FGSC A1513).